Consider the following 100-residue polypeptide: UPF0213 protein CKO_04549 (100 aa).

Residues 2-77 (TPWYLYLIRT…KRLTKRQKER (76 aa)) enclose the GIY-YIG domain.

It belongs to the UPF0213 family.

This is UPF0213 protein CKO_04549 from Citrobacter koseri (strain ATCC BAA-895 / CDC 4225-83 / SGSC4696).